A 465-amino-acid chain; its full sequence is D(1C) dopamine receptor (465 aa).

Over 1–30 the chain is Extracellular; the sequence is MENFSIFNVTVNVWHADLDVGNSDLSLRAL. 2 N-linked (GlcNAc...) asparagine glycosylation sites follow: Asn-3 and Asn-8. Residues 31-54 form a helical membrane-spanning segment; sequence TGLLLSLLILSTLLGNTLVCLAVI. Residues 55–65 are Cytoplasmic-facing; sequence KFRHLRSKVTN. Residues 66–92 form a helical membrane-spanning segment; that stretch reads FFVISLAVSDLFVALLVMPWKAVTEVA. Over 93 to 101 the chain is Extracellular; the sequence is GFWVFGDFC. Cys-101 and Cys-187 are disulfide-bonded. The chain crosses the membrane as a helical span at residues 102–124; sequence DTWVAFDIMCSTASILNLCIISL. Residues 125–143 are Cytoplasmic-facing; that stretch reads DRYWAIASPFRYERKMTQR. Residues 144–168 form a helical membrane-spanning segment; it reads VAFIMIGVAWTLSILISFIPVQLSW. The Extracellular portion of the chain corresponds to 169–193; the sequence is HKSHEADEELNGVNHTENCDSSLNR. The chain crosses the membrane as a helical span at residues 194-219; the sequence is TYAISSSLISFYIPVVIMIGTYTRIY. Residues 220 to 264 lie on the Cytoplasmic side of the membrane; that stretch reads RIAQTQIRRISSLERAVEHAQRCSSRLSNENSLKTSFRKETKVLK. Residues 265-291 form a helical membrane-spanning segment; the sequence is TLSIIMGVFVFCWLPFFVLNCMIPFCH. Residues 292–309 are Extracellular-facing; the sequence is MNLPGQNEPEPPCVSETT. A helical transmembrane segment spans residues 310 to 334; it reads FNIFVWFGWANSSLNPVIYAFNADF. Residues 335–465 are Cytoplasmic-facing; the sequence is RKAFTTILGC…EDRHYTTKLY (131 aa). Residue Cys-344 is the site of S-palmitoyl cysteine attachment.

This sequence belongs to the G-protein coupled receptor 1 family. Brain and kidney.

It localises to the cell membrane. It is found in the cell projection. The protein localises to the cilium membrane. Its function is as follows. This is one of the five types (D1 to D5) of receptors for dopamine. The activity of this receptor is mediated by G proteins which activate adenylyl cyclase. The polypeptide is D(1C) dopamine receptor (drd1c) (Xenopus laevis (African clawed frog)).